We begin with the raw amino-acid sequence, 179 residues long: Protein GrpE (179 aa).

The segment at 1 to 45 is disordered; that stretch reads MSEEKLTQDPTAEEEQTETADQQESADVNWEQEAAHWKAQAEEHQ. Basic and acidic residues predominate over residues 33–45; that stretch reads EAAHWKAQAEEHQ.

The protein belongs to the GrpE family. As to quaternary structure, homodimer.

The protein localises to the cytoplasm. Functionally, participates actively in the response to hyperosmotic and heat shock by preventing the aggregation of stress-denatured proteins, in association with DnaK and GrpE. It is the nucleotide exchange factor for DnaK and may function as a thermosensor. Unfolded proteins bind initially to DnaJ; upon interaction with the DnaJ-bound protein, DnaK hydrolyzes its bound ATP, resulting in the formation of a stable complex. GrpE releases ADP from DnaK; ATP binding to DnaK triggers the release of the substrate protein, thus completing the reaction cycle. Several rounds of ATP-dependent interactions between DnaJ, DnaK and GrpE are required for fully efficient folding. This chain is Protein GrpE, found in Brevibacillus choshinensis.